Reading from the N-terminus, the 460-residue chain is tRNA modification GTPase MnmE (460 aa).

Arg29, Glu91, and Lys132 together coordinate (6S)-5-formyl-5,6,7,8-tetrahydrofolate. The TrmE-type G domain maps to 227–383 (GISIALIGKT…LIDTIIKKCG (157 aa)). A K(+)-binding site is contributed by Asn237. GTP contacts are provided by residues 237 to 242 (NVGKSS), 256 to 262 (TNIPGTT), and 281 to 284 (DTAG). Residue Ser241 participates in Mg(2+) binding. Thr256, Ile258, and Thr261 together coordinate K(+). Thr262 is a binding site for Mg(2+). Position 460 (Lys460) interacts with (6S)-5-formyl-5,6,7,8-tetrahydrofolate.

The protein belongs to the TRAFAC class TrmE-Era-EngA-EngB-Septin-like GTPase superfamily. TrmE GTPase family. In terms of assembly, homodimer. Heterotetramer of two MnmE and two MnmG subunits. K(+) serves as cofactor.

It is found in the cytoplasm. Functionally, exhibits a very high intrinsic GTPase hydrolysis rate. Involved in the addition of a carboxymethylaminomethyl (cmnm) group at the wobble position (U34) of certain tRNAs, forming tRNA-cmnm(5)s(2)U34. The protein is tRNA modification GTPase MnmE of Prochlorococcus marinus (strain MIT 9312).